Reading from the N-terminus, the 123-residue chain is Large ribosomal subunit protein uL14 (123 aa).

The protein belongs to the universal ribosomal protein uL14 family. As to quaternary structure, part of the 50S ribosomal subunit. Forms a cluster with proteins L3 and L19. In the 70S ribosome, L14 and L19 interact and together make contacts with the 16S rRNA in bridges B5 and B8.

Its function is as follows. Binds to 23S rRNA. Forms part of two intersubunit bridges in the 70S ribosome. The polypeptide is Large ribosomal subunit protein uL14 (Corynebacterium jeikeium (strain K411)).